Consider the following 262-residue polypeptide: UDP-2,3-diacylglucosamine hydrolase (262 aa).

Asp10, His12, Asp47, Asn86, His121, His218, and His220 together coordinate Mn(2+).

The protein belongs to the LpxH family. Requires Mn(2+) as cofactor.

The protein resides in the cell inner membrane. It localises to the cytoplasm. It catalyses the reaction UDP-2-N,3-O-bis[(3R)-3-hydroxytetradecanoyl]-alpha-D-glucosamine + H2O = 2-N,3-O-bis[(3R)-3-hydroxytetradecanoyl]-alpha-D-glucosaminyl 1-phosphate + UMP + 2 H(+). It participates in glycolipid biosynthesis; lipid IV(A) biosynthesis; lipid IV(A) from (3R)-3-hydroxytetradecanoyl-[acyl-carrier-protein] and UDP-N-acetyl-alpha-D-glucosamine: step 4/6. Hydrolyzes the pyrophosphate bond of UDP-2,3-diacylglucosamine to yield 2,3-diacylglucosamine 1-phosphate (lipid X) and UMP by catalyzing the attack of water at the alpha-P atom. Involved in the biosynthesis of lipid A, a phosphorylated glycolipid that anchors the lipopolysaccharide to the outer membrane of the cell. The protein is UDP-2,3-diacylglucosamine hydrolase of Porphyromonas gingivalis (strain ATCC BAA-308 / W83).